A 701-amino-acid polypeptide reads, in one-letter code: Polyphosphate kinase (701 aa).

Asn45 lines the ATP pocket. Residues Arg373 and Arg403 each contribute to the Mg(2+) site. Positions 428-462 (PGMKIHAKLLLITRKEGDEFVRYAHIGTGNFHERT) constitute a PLD phosphodiesterase 1 domain. The active-site Phosphohistidine intermediate is His433. Residues Tyr466, Arg562, and His590 each contribute to the ATP site. The region spanning 585-615 (DRFLEHPRVLVVHNDGNPQVFISSADWMERN) is the PLD phosphodiesterase 2 domain.

It belongs to the polyphosphate kinase 1 (PPK1) family. The cofactor is Mg(2+). An intermediate of this reaction is the autophosphorylated ppk in which a phosphate is covalently linked to a histidine residue through a N-P bond.

It carries out the reaction [phosphate](n) + ATP = [phosphate](n+1) + ADP. Its function is as follows. Catalyzes the reversible transfer of the terminal phosphate of ATP to form a long-chain polyphosphate (polyP). The sequence is that of Polyphosphate kinase from Vibrio cholerae serotype O1 (strain ATCC 39315 / El Tor Inaba N16961).